Here is a 316-residue protein sequence, read N- to C-terminus: Olfactory receptor 52A5 (316 aa).

Residues 1–27 (MPTFNGSVFMPSAFILIGIPGLESVQC) lie on the Extracellular side of the membrane. N-linked (GlcNAc...) asparagine glycosylation is present at asparagine 5. A helical transmembrane segment spans residues 28–48 (WIGIPFSAMYLIGVIGNSLIL). The Cytoplasmic segment spans residues 49 to 56 (VIIKYENS). The helical transmembrane segment at 57–77 (LHIPMYIFLAMLAATDIALNT) threads the bilayer. Residues 78–101 (CILPKMLGIFWFHLPEISFDACLF) lie on the Extracellular side of the membrane. Residues 102-122 (QMWLIHSFQAIESGILLAMAL) form a helical membrane-spanning segment. The Cytoplasmic segment spans residues 123–141 (DRYVAICIPLRHATIFSQQ). A helical membrane pass occupies residues 142 to 162 (FLTHIGLGVTLRAAILIIPSL). Residues 163–199 (GLIKCCLKHYRTTVISHSYCEHMAIVKLATEDIRVNK) are Extracellular-facing. Residues 200–220 (IYGLFVAFAILGFDIIFITLS) form a helical membrane-spanning segment. Residues 221 to 240 (YVQIFITVFQLPQKEARFKA) are Cytoplasmic-facing. Residues 241–261 (FNTCIAHICVFLQFYLLAFFS) traverse the membrane as a helical segment. The Extracellular portion of the chain corresponds to 262–276 (FFTHRFGSHIPPYIH). A helical membrane pass occupies residues 277 to 297 (ILLSNLYLLVPPFLNPIVYGV). Over 298-316 (KTKQIRDHIVKVFFFKKVT) the chain is Cytoplasmic.

This sequence belongs to the G-protein coupled receptor 1 family.

Its subcellular location is the cell membrane. Odorant receptor. This Homo sapiens (Human) protein is Olfactory receptor 52A5 (OR52A5).